The chain runs to 72 residues: Putative membrane protein insertion efficiency factor (72 aa).

This sequence belongs to the UPF0161 family.

It localises to the cell inner membrane. Functionally, could be involved in insertion of integral membrane proteins into the membrane. This Amoebophilus asiaticus (strain 5a2) protein is Putative membrane protein insertion efficiency factor.